Reading from the N-terminus, the 310-residue chain is HTH-type transcriptional activator TtdR (310 aa).

The HTH lysR-type domain maps to 6 to 63 (PLAKDLQVLVEIVHSGSFSAAAATLGQTPAFVTKRIQILENTLATTLLNRSARGVALT). The H-T-H motif DNA-binding region spans 23 to 42 (FSAAAATLGQTPAFVTKRIQ).

The protein belongs to the LysR transcriptional regulatory family.

In terms of biological role, positive regulator required for L-tartrate-dependent anaerobic growth on glycerol. Induces expression of the ttdA-ttdB-ygjE operon. The polypeptide is HTH-type transcriptional activator TtdR (ttdR) (Escherichia coli (strain K12)).